A 634-amino-acid chain; its full sequence is Ras and EF-hand domain-containing protein homolog (634 aa).

EF-hand domains lie at 5-33 (EVENLFSLCDSESKGYLTMEDLRKVCPQL) and 33-68 (LDDNDLRFIFTELDQDGSGKIEKLEFLRGFQDTVQH). Ca(2+) contacts are provided by Asp-46, Asp-48, Ser-50, Lys-52, and Glu-57. Positions 169-310 (LSEKKHENER…RCEFDQKQDE (142 aa)) form a coiled coil. The segment at 212-234 (ARQEERDRLTKEKEEMRQRMSDE) is disordered. GTP-binding positions include 449 to 454 (AVGKSS), 552 to 555 (NKVD), and 585 to 586 (AL). Residues 632–634 (RGS) constitute a propeptide, removed in mature form.

This sequence belongs to the small GTPase superfamily. Rab family. As to quaternary structure, homodimer.

The protein resides in the cytoplasm. It is found in the perinuclear region. Functionally, binds GTP and GDP. Plays a role in uterine seam cell development. The polypeptide is Ras and EF-hand domain-containing protein homolog (Caenorhabditis elegans).